The chain runs to 455 residues: Bifunctional protein GlmU (455 aa).

Residues 1–226 (MSLDIVILAA…AMEVQGANDR (226 aa)) form a pyrophosphorylase region. UDP-N-acetyl-alpha-D-glucosamine contacts are provided by residues 8 to 11 (LAAG), Lys22, Gln73, 78 to 79 (GT), 99 to 101 (YGD), Gly136, Glu151, Asn166, and Asn224. Asp101 contacts Mg(2+). Asn224 serves as a coordination point for Mg(2+). The tract at residues 227 to 247 (RQLSELERHYQLREGRRLMAQ) is linker. Residues 248 to 455 (GVTLRDPARF…WKRPEKIKKS (208 aa)) are N-acetyltransferase. Arg330 and Lys348 together coordinate UDP-N-acetyl-alpha-D-glucosamine. Catalysis depends on His360, which acts as the Proton acceptor. The UDP-N-acetyl-alpha-D-glucosamine site is built by Tyr363 and Asn374. Residues Ala377, 383 to 384 (NY), Ser402, Ala420, and Arg437 contribute to the acetyl-CoA site.

The protein in the N-terminal section; belongs to the N-acetylglucosamine-1-phosphate uridyltransferase family. In the C-terminal section; belongs to the transferase hexapeptide repeat family. In terms of assembly, homotrimer. Mg(2+) is required as a cofactor.

Its subcellular location is the cytoplasm. The enzyme catalyses alpha-D-glucosamine 1-phosphate + acetyl-CoA = N-acetyl-alpha-D-glucosamine 1-phosphate + CoA + H(+). It carries out the reaction N-acetyl-alpha-D-glucosamine 1-phosphate + UTP + H(+) = UDP-N-acetyl-alpha-D-glucosamine + diphosphate. Its pathway is nucleotide-sugar biosynthesis; UDP-N-acetyl-alpha-D-glucosamine biosynthesis; N-acetyl-alpha-D-glucosamine 1-phosphate from alpha-D-glucosamine 6-phosphate (route II): step 2/2. The protein operates within nucleotide-sugar biosynthesis; UDP-N-acetyl-alpha-D-glucosamine biosynthesis; UDP-N-acetyl-alpha-D-glucosamine from N-acetyl-alpha-D-glucosamine 1-phosphate: step 1/1. It participates in bacterial outer membrane biogenesis; LPS lipid A biosynthesis. Catalyzes the last two sequential reactions in the de novo biosynthetic pathway for UDP-N-acetylglucosamine (UDP-GlcNAc). The C-terminal domain catalyzes the transfer of acetyl group from acetyl coenzyme A to glucosamine-1-phosphate (GlcN-1-P) to produce N-acetylglucosamine-1-phosphate (GlcNAc-1-P), which is converted into UDP-GlcNAc by the transfer of uridine 5-monophosphate (from uridine 5-triphosphate), a reaction catalyzed by the N-terminal domain. The chain is Bifunctional protein GlmU from Pseudomonas putida (strain ATCC 47054 / DSM 6125 / CFBP 8728 / NCIMB 11950 / KT2440).